Here is a 208-residue protein sequence, read N- to C-terminus: Endoplasmic reticulum vesicle protein 25 (208 aa).

The first 15 residues, 1–15, serve as a signal peptide directing secretion; it reads MKFLLLLLLAPFISA. Topologically, residues 16–177 are lumenal; sequence LRFDLKAESK…TNESTNERVR (162 aa). The GOLD domain occupies 28–118; the sequence is QMCIRDFVSE…KRAIELDIES (91 aa). A helical membrane pass occupies residues 178 to 198; that stretch reads NFSVLVIIVLTSLGAWQVNYL. Over 199–208 the chain is Cytoplasmic; sequence KNYFKSKHII.

This sequence belongs to the EMP24/GP25L family.

It is found in the endoplasmic reticulum membrane. The protein localises to the golgi apparatus membrane. In terms of biological role, constituent of COPII-coated endoplasmic reticulum-derived transport vesicles. Required for efficient transport of a subset of secretory proteins to the Golgi. Facilitates retrograde transport from the Golgi to the endoplasmic reticulum. This is Endoplasmic reticulum vesicle protein 25 (ERV25) from Candida glabrata (strain ATCC 2001 / BCRC 20586 / JCM 3761 / NBRC 0622 / NRRL Y-65 / CBS 138) (Yeast).